We begin with the raw amino-acid sequence, 194 residues long: MIKVEDILRAYRHGFFPMADSREGTVSWCQPYQRAVVPLDTFRPSRSLRRVIDEGQFTIKTNTAFEKVIRACALPRAVEKETWISEEIIEVFLKLHRLGLAHSVESWQNGELAGGLYGLSMGGAFFGESMFFFERDASKVAFAWLVGYLRKKGFSLLDAQIMNPHLESLGAIEIPHEEYMLRLEHALAKKIFFI.

This sequence belongs to the L/F-transferase family.

The protein localises to the cytoplasm. The enzyme catalyses N-terminal L-lysyl-[protein] + L-leucyl-tRNA(Leu) = N-terminal L-leucyl-L-lysyl-[protein] + tRNA(Leu) + H(+). It catalyses the reaction N-terminal L-arginyl-[protein] + L-leucyl-tRNA(Leu) = N-terminal L-leucyl-L-arginyl-[protein] + tRNA(Leu) + H(+). It carries out the reaction L-phenylalanyl-tRNA(Phe) + an N-terminal L-alpha-aminoacyl-[protein] = an N-terminal L-phenylalanyl-L-alpha-aminoacyl-[protein] + tRNA(Phe). Its function is as follows. Functions in the N-end rule pathway of protein degradation where it conjugates Leu, Phe and, less efficiently, Met from aminoacyl-tRNAs to the N-termini of proteins containing an N-terminal arginine or lysine. This is Leucyl/phenylalanyl-tRNA--protein transferase from Chlorobaculum parvum (strain DSM 263 / NCIMB 8327) (Chlorobium vibrioforme subsp. thiosulfatophilum).